Here is a 405-residue protein sequence, read N- to C-terminus: LanC-like protein GCL2 (405 aa).

Zn(2+) is bound by residues cysteine 278, cysteine 323, and histidine 324.

The protein belongs to the LanC-like protein family.

In terms of biological role, may play a role in signaling. May be not involved in abscisic acid (ABA) signaling. The chain is LanC-like protein GCL2 (GCL2) from Arabidopsis thaliana (Mouse-ear cress).